A 291-amino-acid chain; its full sequence is Lectin (291 aa).

Residues 1–28 (MGISKKSQLVPLLAFITMFLMVVSRVSS) form the signal peptide. D118 contributes to the Ca(2+) binding site. R138 provides a ligand contact to a carbohydrate. Residues 147–162 (NIIKNSTNLDFNAAYN) constitute a propeptide, removed in mature form. Mn(2+) contacts are provided by E170 and D172. Ca(2+)-binding residues include D172, Y174, N176, and D181. Position 174 (Y174) interacts with a carbohydrate. Positions 181 and 186 each coordinate Mn(2+). K208 lines the Ca(2+) pocket. S228 is a binding site for a carbohydrate. A propeptide spans 281-291 (QLQDLRIASVV) (removed in mature form).

Belongs to the leguminous lectin family. The mature chain consists of residues 163-280 followed by residues 29-147. Concanavalin A-like lectins of the Diocleinae subtribe undergo proteolytic processing referred to as circular permutation. The propeptide is split into an N-terminal and a C-terminal part, the gamma and beta chain, respectively. These are then religated in beta-gamma order to form the mature alpha chain. The beta and gamma chains can often be detected in cell extracts.

Functionally, D-mannose-binding lectin that also binds alpha-methyl-D-mannoside with even higher affinity. Has hemagglutinating activity against rabbit erythrocytes. Shows toxicity against the brine shrimp A.nauplii. Induces reversible paw edema and hypernociceptivity in rats. The protein is Lectin of Dioclea lasiophylla.